Reading from the N-terminus, the 335-residue chain is MKNIKKPFDLKGKSLLKEYDLTGEEFEGLIDFAMTLKKYKQQGTPHRYLEGKNIALLFEKTSTRTRAAFTVASIDLGAHPEFLGKNDIQLGKKESVEDTAKVLGRMFDGIEFRGFSQKTVEQLAEFSGVPVWNGLTDDWHPTQMLADYMTIKENFGYLKGINLTYVGNGRNNVAHSLMVAGAMLGVNVRICTPSSLTPRDVYFNIAKDQASNYGGSVKITDNIHTAVKDADVIYTDVWVSMGEESEFETRIHLLKDYQVNRKMLNLTGKVDTIFLHCLPAFHDTQTEYGQDIFKKYGLTEMEVTDEIFRSEHSRVFDQAENRMHTIKAVMAATLG.

Residues 62 to 65 (STRT), Q89, R113, and 140 to 143 (HPTQ) contribute to the carbamoyl phosphate site. L-ornithine contacts are provided by residues N172, D236, and 240–241 (SM). Carbamoyl phosphate is bound by residues 277 to 278 (CL) and R322.

The protein belongs to the aspartate/ornithine carbamoyltransferase superfamily. OTCase family.

The protein resides in the cytoplasm. The enzyme catalyses carbamoyl phosphate + L-ornithine = L-citrulline + phosphate + H(+). It functions in the pathway amino-acid degradation; L-arginine degradation via ADI pathway; carbamoyl phosphate from L-arginine: step 2/2. In terms of biological role, reversibly catalyzes the transfer of the carbamoyl group from carbamoyl phosphate (CP) to the N(epsilon) atom of ornithine (ORN) to produce L-citrulline. The chain is Ornithine carbamoyltransferase 2, catabolic (arcB2) from Staphylococcus epidermidis (strain ATCC 12228 / FDA PCI 1200).